Reading from the N-terminus, the 436-residue chain is 3-phosphoshikimate 1-carboxyvinyltransferase (436 aa).

Lys-23, Ser-24, and Arg-28 together coordinate 3-phosphoshikimate. Lys-23 contributes to the phosphoenolpyruvate binding site. Gly-97 and Arg-126 together coordinate phosphoenolpyruvate. The 3-phosphoshikimate site is built by Ser-171, Gln-173, Asp-323, and Lys-350. Gln-173 is a binding site for phosphoenolpyruvate. The Proton acceptor role is filled by Asp-323. Phosphoenolpyruvate contacts are provided by Arg-354 and Arg-396.

This sequence belongs to the EPSP synthase family. As to quaternary structure, monomer.

It localises to the cytoplasm. The enzyme catalyses 3-phosphoshikimate + phosphoenolpyruvate = 5-O-(1-carboxyvinyl)-3-phosphoshikimate + phosphate. Its pathway is metabolic intermediate biosynthesis; chorismate biosynthesis; chorismate from D-erythrose 4-phosphate and phosphoenolpyruvate: step 6/7. Functionally, catalyzes the transfer of the enolpyruvyl moiety of phosphoenolpyruvate (PEP) to the 5-hydroxyl of shikimate-3-phosphate (S3P) to produce enolpyruvyl shikimate-3-phosphate and inorganic phosphate. This chain is 3-phosphoshikimate 1-carboxyvinyltransferase, found in Prochlorococcus marinus (strain AS9601).